We begin with the raw amino-acid sequence, 329 residues long: 4-hydroxythreonine-4-phosphate dehydrogenase (329 aa).

Substrate-binding residues include H136 and T137. 3 residues coordinate a divalent metal cation: H166, H211, and H266. Substrate-binding residues include K274, N283, and R292.

Belongs to the PdxA family. Homodimer. Requires Zn(2+) as cofactor. Mg(2+) serves as cofactor. Co(2+) is required as a cofactor.

Its subcellular location is the cytoplasm. The catalysed reaction is 4-(phosphooxy)-L-threonine + NAD(+) = 3-amino-2-oxopropyl phosphate + CO2 + NADH. The protein operates within cofactor biosynthesis; pyridoxine 5'-phosphate biosynthesis; pyridoxine 5'-phosphate from D-erythrose 4-phosphate: step 4/5. Its function is as follows. Catalyzes the NAD(P)-dependent oxidation of 4-(phosphooxy)-L-threonine (HTP) into 2-amino-3-oxo-4-(phosphooxy)butyric acid which spontaneously decarboxylates to form 3-amino-2-oxopropyl phosphate (AHAP). The chain is 4-hydroxythreonine-4-phosphate dehydrogenase from Neisseria meningitidis serogroup A / serotype 4A (strain DSM 15465 / Z2491).